The primary structure comprises 87 residues: Exodeoxyribonuclease 7 small subunit (87 aa).

This sequence belongs to the XseB family. As to quaternary structure, heterooligomer composed of large and small subunits.

The protein localises to the cytoplasm. The catalysed reaction is Exonucleolytic cleavage in either 5'- to 3'- or 3'- to 5'-direction to yield nucleoside 5'-phosphates.. Its function is as follows. Bidirectionally degrades single-stranded DNA into large acid-insoluble oligonucleotides, which are then degraded further into small acid-soluble oligonucleotides. The sequence is that of Exodeoxyribonuclease 7 small subunit from Solidesulfovibrio magneticus (strain ATCC 700980 / DSM 13731 / RS-1) (Desulfovibrio magneticus).